An 85-amino-acid polypeptide reads, in one-letter code: Toxin TdNa9 (85 aa).

A signal peptide spans 1–21; it reads MLKFAIAVALLLFIGLELREA. The LCN-type CS-alpha/beta domain maps to 22–84; it reads RDGYPQSKVN…YGDPGTKPCM (63 aa). 4 disulfide bridges follow: Cys33–Cys83, Cys37–Cys58, Cys43–Cys63, and Cys47–Cys65.

Belongs to the long (4 C-C) scorpion toxin superfamily. Sodium channel inhibitor family. Beta subfamily. As to expression, expressed by the venom gland.

It is found in the secreted. In terms of biological role, alpha toxins bind voltage-independently at site-3 of sodium channels (Nav) and inhibit the inactivation of the activated channels, thereby blocking neuronal transmission. This toxin binds, in vitro, to sodium channels and inhibits the inactivation of the activated channels. Seems not toxic to mice, crickets and sweet-water shrimps. The polypeptide is Toxin TdNa9 (Tityus discrepans (Venezuelan scorpion)).